We begin with the raw amino-acid sequence, 794 residues long: Phenylalanine--tRNA ligase beta subunit (794 aa).

The tRNA-binding domain occupies 39-148 (APAFDNVVVA…SDAPVGQAIR (110 aa)). Positions 399–474 (PVRKPVLLRT…RLYGYDNIPS (76 aa)) constitute a B5 domain. D452, D458, E461, and E462 together coordinate Mg(2+). The FDX-ACB domain occupies 700 to 793 (SKFPPVIRDL…FEQAFGAQLR (94 aa)).

Belongs to the phenylalanyl-tRNA synthetase beta subunit family. Type 1 subfamily. In terms of assembly, tetramer of two alpha and two beta subunits. The cofactor is Mg(2+).

It is found in the cytoplasm. It carries out the reaction tRNA(Phe) + L-phenylalanine + ATP = L-phenylalanyl-tRNA(Phe) + AMP + diphosphate + H(+). This chain is Phenylalanine--tRNA ligase beta subunit, found in Dechloromonas aromatica (strain RCB).